A 543-amino-acid chain; its full sequence is CTP synthase (543 aa).

The amidoligase domain stretch occupies residues 1-265; that stretch reads MTRFIFVTGG…DQIVLDKFGL (265 aa). Ser13 lines the CTP pocket. Position 13 (Ser13) interacts with UTP. ATP contacts are provided by residues 14 to 19 and Asp71; that span reads SLGKGI. Asp71 and Glu139 together coordinate Mg(2+). CTP contacts are provided by residues 146-148, 186-191, and Lys222; these read DIE and KTKPTQ. UTP contacts are provided by residues 186–191 and Lys222; that span reads KTKPTQ. Positions 290–541 constitute a Glutamine amidotransferase type-1 domain; the sequence is TIAMVGKYMD…IQAAVEQNER (252 aa). Gly351 provides a ligand contact to L-glutamine. Cys378 acts as the Nucleophile; for glutamine hydrolysis in catalysis. Residues 379 to 382, Glu402, and Arg469 each bind L-glutamine; that span reads LGMQ. Residues His514 and Glu516 contribute to the active site.

It belongs to the CTP synthase family. In terms of assembly, homotetramer.

It carries out the reaction UTP + L-glutamine + ATP + H2O = CTP + L-glutamate + ADP + phosphate + 2 H(+). It catalyses the reaction L-glutamine + H2O = L-glutamate + NH4(+). The catalysed reaction is UTP + NH4(+) + ATP = CTP + ADP + phosphate + 2 H(+). The protein operates within pyrimidine metabolism; CTP biosynthesis via de novo pathway; CTP from UDP: step 2/2. Its activity is regulated as follows. Allosterically activated by GTP, when glutamine is the substrate; GTP has no effect on the reaction when ammonia is the substrate. The allosteric effector GTP functions by stabilizing the protein conformation that binds the tetrahedral intermediate(s) formed during glutamine hydrolysis. Inhibited by the product CTP, via allosteric rather than competitive inhibition. Functionally, catalyzes the ATP-dependent amination of UTP to CTP with either L-glutamine or ammonia as the source of nitrogen. Regulates intracellular CTP levels through interactions with the four ribonucleotide triphosphates. This chain is CTP synthase, found in Saccharophagus degradans (strain 2-40 / ATCC 43961 / DSM 17024).